Reading from the N-terminus, the 235-residue chain is Ribosomal RNA large subunit methyltransferase E (235 aa).

G76, W78, D99, D115, and D139 together coordinate S-adenosyl-L-methionine. K179 functions as the Proton acceptor in the catalytic mechanism.

This sequence belongs to the class I-like SAM-binding methyltransferase superfamily. RNA methyltransferase RlmE family.

It is found in the cytoplasm. It carries out the reaction uridine(2552) in 23S rRNA + S-adenosyl-L-methionine = 2'-O-methyluridine(2552) in 23S rRNA + S-adenosyl-L-homocysteine + H(+). In terms of biological role, specifically methylates the uridine in position 2552 of 23S rRNA at the 2'-O position of the ribose in the fully assembled 50S ribosomal subunit. The polypeptide is Ribosomal RNA large subunit methyltransferase E (Rhodopseudomonas palustris (strain BisB5)).